Here is a 78-residue protein sequence, read N- to C-terminus: MKVSSHEMVPTHEIIPREEIPLLLEKYNIKLQQLPKLLDTDPLVLETEATPGDVLKITRMSPTAGESTYYRLVIATSL.

It belongs to the archaeal Rpo5/eukaryotic RPB5 RNA polymerase subunit family. In terms of assembly, part of the RNA polymerase complex.

It localises to the cytoplasm. It catalyses the reaction RNA(n) + a ribonucleoside 5'-triphosphate = RNA(n+1) + diphosphate. In terms of biological role, DNA-dependent RNA polymerase (RNAP) catalyzes the transcription of DNA into RNA using the four ribonucleoside triphosphates as substrates. The protein is DNA-directed RNA polymerase subunit Rpo5 of Methanococcus maripaludis (strain C6 / ATCC BAA-1332).